Consider the following 642-residue polypeptide: Serine/threonine-protein kinase pakA (642 aa).

Polar residues-rich tracts occupy residues 1-12 (MSLKKQQQQSDF) and 38-48 (LRQSASFTALN). A disordered region spans residues 1–82 (MSLKKQQQQS…GFGTKPRRKN (82 aa)). A CRIB domain is found at 100–113 (ISAPENPVHVTHVG). Disordered regions lie at residues 180 to 276 (GEYP…PIPE) and 317 to 338 (QLDR…RTRQ). Low complexity-rich tracts occupy residues 217–227 (SQSSPVPVLSS) and 254–266 (VVSN…RPAN). One can recognise a Protein kinase domain in the interval 361–612 (YYNLNKIGQG…AHDLLKHPFM (252 aa)). ATP-binding positions include 367-375 (IGQGASGGV) and Lys390. The active-site Proton acceptor is Asp480.

It belongs to the protein kinase superfamily. STE Ser/Thr protein kinase family. STE20 subfamily.

It localises to the cytoplasm. Its subcellular location is the nucleus. The enzyme catalyses L-seryl-[protein] + ATP = O-phospho-L-seryl-[protein] + ADP + H(+). The catalysed reaction is L-threonyl-[protein] + ATP = O-phospho-L-threonyl-[protein] + ADP + H(+). Functionally, MAP4K component of the MAPK pathway required for the mating pheromone response and the regulation of cell polarity and cell cycle. The chain is Serine/threonine-protein kinase pakA (pakA) from Talaromyces marneffei (Penicillium marneffei).